The chain runs to 303 residues: Taste receptor type 2 member 13 (303 aa).

Topologically, residues 1 to 7 are extracellular; it reads MESALPS. A helical membrane pass occupies residues 8–28; that stretch reads IFTLVIIAEFIIGNLSNGFIV. Residues 29–55 lie on the Cytoplasmic side of the membrane; it reads LINCIDWVSKRELSSVDKLLIILAISR. A helical transmembrane segment spans residues 56 to 76; sequence IGLIWEILVSWFLALHSLAIF. The Extracellular segment spans residues 77 to 85; it reads VSGTGLRIM. Residues 86–106 form a helical membrane-spanning segment; sequence IFSWIVSNHFNLWLATILSIF. Topologically, residues 107-128 are cytoplasmic; that stretch reads YLLKIASFSSPAFLYLKRRVNK. Residues 129-149 traverse the membrane as a helical segment; sequence VILMILLGTLVFLFLNLIQIN. Over 150–184 the chain is Extracellular; that stretch reads MLIKDWLDRYERNTTWNFSMSDFETFSVSVRFTMT. 2 N-linked (GlcNAc...) asparagine glycosylation sites follow: asparagine 162 and asparagine 166. The helical transmembrane segment at 185 to 205 threads the bilayer; sequence MFSLTPFTVAFISFLLLVFSL. The Cytoplasmic segment spans residues 206 to 232; sequence QKHLQKMQLNYKGHRDPRTKVHTNALK. A helical membrane pass occupies residues 233-253; that stretch reads IVISFLLLYASFFLSILISWI. Topologically, residues 254-261 are extracellular; the sequence is SELYQNTV. Residues 262–282 traverse the membrane as a helical segment; that stretch reads IYMLCETIGAFYPSSHSFLLI. Residues 283–303 lie on the Cytoplasmic side of the membrane; it reads LGNAKLRQAFLLVAAKVWAKR.

The protein belongs to the G-protein coupled receptor T2R family.

The protein localises to the membrane. In terms of biological role, receptor that may play a role in the perception of bitterness and is gustducin-linked. May play a role in sensing the chemical composition of the gastrointestinal content. The activity of this receptor may stimulate alpha gustducin, mediate PLC-beta-2 activation and lead to the gating of TRPM5. The sequence is that of Taste receptor type 2 member 13 (TAS2R13) from Pan troglodytes (Chimpanzee).